Consider the following 389-residue polypeptide: Type 2 DNA topoisomerase 6 subunit A (389 aa).

Positions 13 to 161 (KARLRAAEVM…MLILSKEKGK (149 aa)) constitute a Topo IIA-type catalytic domain. Catalysis depends on Tyr107, which acts as the O-(5'-phospho-DNA)-tyrosine intermediate. Mg(2+) contacts are provided by Glu208 and Asp260.

It belongs to the TOP6A family. In terms of assembly, homodimer. Heterotetramer of two Top6A and two Top6B chains. It depends on Mg(2+) as a cofactor.

It carries out the reaction ATP-dependent breakage, passage and rejoining of double-stranded DNA.. In terms of biological role, relaxes both positive and negative superturns and exhibits a strong decatenase activity. In Aeropyrum pernix (strain ATCC 700893 / DSM 11879 / JCM 9820 / NBRC 100138 / K1), this protein is Type 2 DNA topoisomerase 6 subunit A.